Consider the following 898-residue polypeptide: Protein SOV1, mitochondrial (898 aa).

The transit peptide at 1–31 (MFKYNRSLCSSALIAKSQIRFYRLKRAPLNY) directs the protein to the mitochondrion.

Its subcellular location is the mitochondrion. This chain is Protein SOV1, mitochondrial (SOV1), found in Saccharomyces cerevisiae (strain ATCC 204508 / S288c) (Baker's yeast).